Here is a 492-residue protein sequence, read N- to C-terminus: Bifunctional purine biosynthesis protein PurH (492 aa).

One can recognise an MGS-like domain in the interval 1 to 144 (MKKAILSVSN…KNFKHVITVV (144 aa)).

The protein belongs to the PurH family.

It carries out the reaction (6R)-10-formyltetrahydrofolate + 5-amino-1-(5-phospho-beta-D-ribosyl)imidazole-4-carboxamide = 5-formamido-1-(5-phospho-D-ribosyl)imidazole-4-carboxamide + (6S)-5,6,7,8-tetrahydrofolate. It catalyses the reaction IMP + H2O = 5-formamido-1-(5-phospho-D-ribosyl)imidazole-4-carboxamide. The protein operates within purine metabolism; IMP biosynthesis via de novo pathway; 5-formamido-1-(5-phospho-D-ribosyl)imidazole-4-carboxamide from 5-amino-1-(5-phospho-D-ribosyl)imidazole-4-carboxamide (10-formyl THF route): step 1/1. It participates in purine metabolism; IMP biosynthesis via de novo pathway; IMP from 5-formamido-1-(5-phospho-D-ribosyl)imidazole-4-carboxamide: step 1/1. This Staphylococcus saprophyticus subsp. saprophyticus (strain ATCC 15305 / DSM 20229 / NCIMB 8711 / NCTC 7292 / S-41) protein is Bifunctional purine biosynthesis protein PurH.